A 456-amino-acid polypeptide reads, in one-letter code: Major facilitator superfamily domain-containing protein 10 (456 aa).

Helical transmembrane passes span 25 to 45, 87 to 107, and 114 to 136; these read VIIV…LLLP, VLFG…SAPL, and YLGR…AVWA. Residue asparagine 159 is glycosylated (N-linked (GlcNAc...) asparagine). The next 8 helical transmembrane spans lie at 179–199, 203–223, 278–298, 311–328, 345–365, 366–386, 403–423, and 424–444; these read AVIG…GAFL, MVPW…FCFL, LVYF…SFLA, KMFF…GTYA, LLLV…TLGL, GLML…TMVS, SLGA…YWLT, and GAQV…LLLW.

Belongs to the major facilitator superfamily. As to expression, esxpressed in luminal membrane of renal tubules. Expressed at the surface of eosinophils (at protein level).

It localises to the nucleus inner membrane. It is found in the cell membrane. Probable organic anion transporter which may serve as a transporter for some non-steroidal anti-inflammatory drugs (NSAIDs) as well as other organic anions across the luminal membranes of renal proximal tubules at the final excretion step into the urine. This is Major facilitator superfamily domain-containing protein 10 (Mfsd10) from Mus musculus (Mouse).